The primary structure comprises 1036 residues: uncharacterized protein (1036 aa).

This is an uncharacterized protein from Schizosaccharomyces pombe (strain 972 / ATCC 24843) (Fission yeast).